The following is a 444-amino-acid chain: U4/U6 snRNA-associated-splicing factor PRP24 (444 aa).

Over residues 1–16 (MEYGHHARPDSKRPLD) the composition is skewed to basic and acidic residues. A disordered region spans residues 1–29 (MEYGHHARPDSKRPLDEGSPAAAGLTSKK). Ser19 carries the phosphoserine modification. RRM domains lie at 41 to 116 (TTVL…HLTE), 117 to 195 (CTLW…VSNP), and 210 to 289 (REIM…LADK).

In terms of assembly, monomer. Interacts with U6 snRNA SNR6 and the LSM2-8 complex (small nuclear RNA); to chaperone formation of the U4/U6-U5 tri-snRNP (small nuclear ribonucleoprotein) assembly, the protein is displaced from the U4/U6 snRNP once pairing is complete.

It is found in the nucleus. Functionally, functions as a recycling factor of the spliceosome, a machinery that forms on each precursor-messenger RNA (pre-mRNA) and catalyzes the removal of introns. Chaperones the re-annealing of U4 and U6 snRNAs (small nuclear RNAs) released from previous rounds of splicing, an initial step in reforming the U4/U6-U5 tri-snRNP (small nuclear ribonucleoprotein) that can reassemble into another spliceosome complex; this step involves binding U6 and facilitating the unwinding of the U6 internal stem loop, followed by base-pairing of U6 to U4. This Saccharomyces cerevisiae (strain ATCC 204508 / S288c) (Baker's yeast) protein is U4/U6 snRNA-associated-splicing factor PRP24 (PRP24).